The chain runs to 741 residues: Eukaryotic peptide chain release factor GTP-binding subunit (741 aa).

The segment at 5–135 is several sort of repeats; the sequence is QQQQQQFNAN…SYNNNNNYNN (131 aa). Residues 59-161 show a composition bias toward low complexity; the sequence is QQFGQYGQQQ…DQQQETGSGQ (103 aa). Disordered stretches follow at residues 59–186 and 199–264; these read QQFG…KKVL and IVTK…KTEA. Residues 162-311 are charged; that stretch reads MSLEDYQKQQ…EQIDASIVND (150 aa). 2 stretches are compositionally biased toward basic and acidic residues: residues 166-175 and 202-241; these read DYQKQQKESL and KKKEEEPVNQESKTEEPAKEEIKNQEPAEAENKVEEESKV. In terms of domain architecture, tr-type G spans 316–541; that stretch reads KDHMSIIFMG…YLDSMPLAVR (226 aa). The interval 325–332 is G1; it reads GHVDAGKS. 325-332 contacts GTP; sequence GHVDAGKS. The interval 381–385 is G2; sequence GKTIE. A Phosphothreonine modification is found at Thr-399. The interval 402-405 is G3; the sequence is DAPG. GTP contacts are provided by residues 402-406 and 464-467; these read DAPGH and NKMD. A G4 region spans residues 464-467; that stretch reads NKMD. Residues 505–507 form a G5 region; the sequence is SGY.

Belongs to the TRAFAC class translation factor GTPase superfamily. Classic translation factor GTPase family. ERF3 subfamily.

The protein localises to the cytoplasm. Its function is as follows. Involved in translation termination. Stimulates the activity of ERF1. Binds guanine nucleotides. This is Eukaryotic peptide chain release factor GTP-binding subunit (SUP2) from Ogataea pini (Yeast).